The following is a 599-amino-acid chain: Elongation factor 4 (599 aa).

Residues lysine 2–glutamate 184 enclose the tr-type G domain. GTP is bound by residues aspartate 14–threonine 19 and asparagine 131–aspartate 134.

This sequence belongs to the TRAFAC class translation factor GTPase superfamily. Classic translation factor GTPase family. LepA subfamily.

It localises to the cell inner membrane. The catalysed reaction is GTP + H2O = GDP + phosphate + H(+). Functionally, required for accurate and efficient protein synthesis under certain stress conditions. May act as a fidelity factor of the translation reaction, by catalyzing a one-codon backward translocation of tRNAs on improperly translocated ribosomes. Back-translocation proceeds from a post-translocation (POST) complex to a pre-translocation (PRE) complex, thus giving elongation factor G a second chance to translocate the tRNAs correctly. Binds to ribosomes in a GTP-dependent manner. In Escherichia fergusonii (strain ATCC 35469 / DSM 13698 / CCUG 18766 / IAM 14443 / JCM 21226 / LMG 7866 / NBRC 102419 / NCTC 12128 / CDC 0568-73), this protein is Elongation factor 4.